Reading from the N-terminus, the 703-residue chain is Polyribonucleotide nucleotidyltransferase (703 aa).

Mg(2+) contacts are provided by D485 and D491. In terms of domain architecture, KH spans 552-611; the sequence is PRIYTLKIDQDKIRDVIGKGGAMIRSITEASDTNIEIEDDGTIKIFATERAKADIAISKI. The region spanning 621-689 is the S1 motif domain; it reads GKTYEGKVTR…RQNRVRLSIK (69 aa).

This sequence belongs to the polyribonucleotide nucleotidyltransferase family. In terms of assembly, component of the RNA degradosome, which is a multiprotein complex involved in RNA processing and mRNA degradation. The cofactor is Mg(2+).

It localises to the cytoplasm. The catalysed reaction is RNA(n+1) + phosphate = RNA(n) + a ribonucleoside 5'-diphosphate. Functionally, involved in mRNA degradation. Catalyzes the phosphorolysis of single-stranded polyribonucleotides processively in the 3'- to 5'-direction. This chain is Polyribonucleotide nucleotidyltransferase, found in Pseudoalteromonas atlantica (strain T6c / ATCC BAA-1087).